The chain runs to 229 residues: Methyltransferase ctvB (229 aa).

The protein belongs to the methyltransferase superfamily.

It participates in mycotoxin biosynthesis. Its function is as follows. Methyltransferase; part of the gene cluster that mediates the biosynthesis of citreoviridin, an inhibitor of the of F1-ATPase beta-subunit. The HR-PKS ctvA accepts acetyl-CoA as the starter unit and catalyzes eight iterations of malonyl-CoA extension and four iterations of SAM-dependent methylation at C4, C12, C14, and C16. The KR and DH domains selectively act on the first six iterations to generate the hexaene chain. In the last three iterations, the KR and DH domains terminate their functions to yield a beta,delta-diketo ester moiety, which then undergoes intramolecular cyclization to yield an alpha-pyrone intermediate. Subsequently, ctvB methylates the alpha-pyrone hydroxyl group to generate citreomontanin. In order to form the tetrahydrofuran ring with the correct stereochemistry, the terminal alkenes of citreomontanin need to undergo isomerization to yield a (17Z)-hexaene, a step that could be catalyzed by ctvC. The (17Z)-hexaene then undergoes bisepoxidation by ctvC to form a (17R,16R,15S,14R)-bisepoxide moiety. Lastly, ctvD acts as a regioselective hydrolase to form the tetrahydrofuran ring with the substituents in the correct absolute configuration, completing the biosynthesis of citreoviridin. This chain is Methyltransferase ctvB, found in Aspergillus terreus (strain NIH 2624 / FGSC A1156).